We begin with the raw amino-acid sequence, 73 residues long: MKVKCLLAVFLIVLIAAEHCQALFFLPSLIGGLISAFKGRRKRELGTQFQPRQKNFMRREVDLERLFAEMPDY.

The N-terminal stretch at 1 to 22 (MKVKCLLAVFLIVLIAAEHCQA) is a signal peptide. Lys-38 is modified (lysine amide). A propeptide spanning residues 44-73 (ELGTQFQPRQKNFMRREVDLERLFAEMPDY) is cleaved from the precursor.

This sequence belongs to the non-disulfide-bridged peptide (NDBP) superfamily. Short antimicrobial peptide (group 4) family. In terms of tissue distribution, expressed by the venom gland.

Its subcellular location is the secreted. The protein resides in the target cell membrane. In terms of biological role, cationic host defense peptide that have antibacterial activity by breaking membranes. Is more effective on Gram-positive than on Gram-negative bacteria. This chain is Mucroporin-like peptide, found in Lychas mucronatus (Chinese swimming scorpion).